The chain runs to 259 residues: Protein unc-50 homolog B (259 aa).

A compositionally biased stretch (polar residues) spans 1-11 (MLPTTSVSPRS). The interval 1-21 (MLPTTSVSPRSPDNGILSPRD) is disordered. Topologically, residues 1 to 82 (MLPTTSVSPR…TKDQWARDDP (82 aa)) are cytoplasmic. The helical transmembrane segment at 83–103 (AFLVLLGIWLCVSTVGFGFVL) threads the bilayer. Topologically, residues 104–109 (DMSFFE) are lumenal. Residues 110–130 (TFTLLLWVVFIDCVGVGLLIA) traverse the membrane as a helical segment. Topologically, residues 131–158 (TSMWFVSNKYMVNRQGKDYDVEWGYTFD) are cytoplasmic. A helical transmembrane segment spans residues 159-179 (VHLNAFYPLLVILHFIQLFFI). At 180–181 (NH) the chain is on the lumenal side. A helical transmembrane segment spans residues 182–202 (VILTGWFIGCFVGNTLWLIAI). Residues 203-222 (GYYIYITFLGYSALPFLKNT) are Cytoplasmic-facing. Residues 223 to 243 (VVLLYPFAALALLYILSLALG) form a helical membrane-spanning segment. Residues 244-259 (WNFTAKLCLFYKYRVR) are Lumenal-facing.

Belongs to the unc-50 family.

Its subcellular location is the nucleus inner membrane. The protein localises to the golgi apparatus membrane. Functionally, involved in the cell surface expression of neuronal nicotinic receptors. Binds RNA. The protein is Protein unc-50 homolog B (unc50-b) of Xenopus laevis (African clawed frog).